A 76-amino-acid chain; its full sequence is Acyl carrier protein (76 aa).

The 76-residue stretch at Met-1–Gln-76 folds into the Carrier domain. Ser-36 is modified (O-(pantetheine 4'-phosphoryl)serine).

Belongs to the acyl carrier protein (ACP) family. In terms of processing, 4'-phosphopantetheine is transferred from CoA to a specific serine of apo-ACP by AcpS. This modification is essential for activity because fatty acids are bound in thioester linkage to the sulfhydryl of the prosthetic group.

The protein localises to the cytoplasm. Its pathway is lipid metabolism; fatty acid biosynthesis. In terms of biological role, carrier of the growing fatty acid chain in fatty acid biosynthesis. The sequence is that of Acyl carrier protein from Deinococcus geothermalis (strain DSM 11300 / CIP 105573 / AG-3a).